The sequence spans 366 residues: ERCC4 domain-containing protein EP364R (366 aa).

The region spanning F3–A101 is the ERCC4 domain.

Belongs to the asfivirus EP364R family.

Its function is as follows. Plays a role in the inhibition of type I interferon signaling pathway. Mechanistically, specifically interacts with 2',3'-cGAMP and cleaves it via its phosphodiesterase activity. In turn, prevents 2',3'-cGAMP interaction with host ER-resident STING1 leading to inhibition of downstream signaling pathway and type I interferon production. The chain is ERCC4 domain-containing protein EP364R from African swine fever virus (isolate Pig/Kenya/KEN-50/1950) (ASFV).